A 72-amino-acid polypeptide reads, in one-letter code: Large ribosomal subunit protein uL29 (72 aa).

It belongs to the universal ribosomal protein uL29 family.

The protein is Large ribosomal subunit protein uL29 of Rhodopirellula baltica (strain DSM 10527 / NCIMB 13988 / SH1).